Consider the following 379-residue polypeptide: Elongation factor Ts, mitochondrial (379 aa).

Residues 1–45 (MALYRTARRPLQMMLFSRLGNPEQNYSSWARKDASQSAFGMFVRL) constitute a mitochondrion transit peptide.

It belongs to the EF-Ts family.

The protein localises to the mitochondrion. Associates with the EF-Tu.GDP complex and induces the exchange of GDP to GTP. It remains bound to the aminoacyl-tRNA.EF-Tu.GTP complex up to the GTP hydrolysis stage on the ribosome. This is Elongation factor Ts, mitochondrial from Ricinus communis (Castor bean).